A 47-amino-acid chain; its full sequence is MAKGKRTFQPNNRRRARVHGFRTRMRTRAGRAIVAARRRKGREKLTA.

The tract at residues 1–28 is disordered; sequence MAKGKRTFQPNNRRRARVHGFRTRMRTR.

Belongs to the bacterial ribosomal protein bL34 family.

The sequence is that of Large ribosomal subunit protein bL34 from Corynebacterium efficiens (strain DSM 44549 / YS-314 / AJ 12310 / JCM 11189 / NBRC 100395).